The primary structure comprises 258 residues: Ubiquinone/menaquinone biosynthesis C-methyltransferase UbiE (258 aa).

Residues 1 to 21 (MSESRTSADGGMETSYGFREV) form a disordered region. Residues Thr81, Asp102, and 130–131 (NA) contribute to the S-adenosyl-L-methionine site.

It belongs to the class I-like SAM-binding methyltransferase superfamily. MenG/UbiE family.

The enzyme catalyses a 2-demethylmenaquinol + S-adenosyl-L-methionine = a menaquinol + S-adenosyl-L-homocysteine + H(+). It catalyses the reaction a 2-methoxy-6-(all-trans-polyprenyl)benzene-1,4-diol + S-adenosyl-L-methionine = a 5-methoxy-2-methyl-3-(all-trans-polyprenyl)benzene-1,4-diol + S-adenosyl-L-homocysteine + H(+). It participates in quinol/quinone metabolism; menaquinone biosynthesis; menaquinol from 1,4-dihydroxy-2-naphthoate: step 2/2. It functions in the pathway cofactor biosynthesis; ubiquinone biosynthesis. In terms of biological role, methyltransferase required for the conversion of demethylmenaquinol (DMKH2) to menaquinol (MKH2) and the conversion of 2-polyprenyl-6-methoxy-1,4-benzoquinol (DDMQH2) to 2-polyprenyl-3-methyl-6-methoxy-1,4-benzoquinol (DMQH2). This chain is Ubiquinone/menaquinone biosynthesis C-methyltransferase UbiE, found in Rhizobium johnstonii (strain DSM 114642 / LMG 32736 / 3841) (Rhizobium leguminosarum bv. viciae).